Reading from the N-terminus, the 155-residue chain is Ribonuclease H (155 aa).

The 142-residue stretch at Met1–Met142 folds into the RNase H type-1 domain. 4 residues coordinate Mg(2+): Asp10, Glu48, Asp70, and Asp134.

Belongs to the RNase H family. As to quaternary structure, monomer. Mg(2+) serves as cofactor.

The protein localises to the cytoplasm. The catalysed reaction is Endonucleolytic cleavage to 5'-phosphomonoester.. Endonuclease that specifically degrades the RNA of RNA-DNA hybrids. This Enterobacter sp. (strain 638) protein is Ribonuclease H.